The chain runs to 282 residues: Putative hydrolase Bcen_5340 (282 aa).

Glutamate 124, glutamate 126, and aspartate 155 together coordinate Mg(2+).

Belongs to the FAH family. It depends on Mg(2+) as a cofactor.

In Burkholderia orbicola (strain AU 1054), this protein is Putative hydrolase Bcen_5340.